Reading from the N-terminus, the 399-residue chain is Succinate--CoA ligase [ADP-forming] subunit beta (399 aa).

Residues 9 to 254 (KAVLQPFGVS…ETEEDAKEIE (246 aa)) form the ATP-grasp domain. ATP-binding positions include Lys-46, 53-55 (GRG), Glu-109, Ser-112, and Glu-117. Residues Asn-209 and Asp-223 each contribute to the Mg(2+) site. Substrate contacts are provided by residues Asn-274 and 331–333 (GIM).

This sequence belongs to the succinate/malate CoA ligase beta subunit family. As to quaternary structure, heterotetramer of two alpha and two beta subunits. It depends on Mg(2+) as a cofactor.

It catalyses the reaction succinate + ATP + CoA = succinyl-CoA + ADP + phosphate. It carries out the reaction GTP + succinate + CoA = succinyl-CoA + GDP + phosphate. It functions in the pathway carbohydrate metabolism; tricarboxylic acid cycle; succinate from succinyl-CoA (ligase route): step 1/1. Its function is as follows. Succinyl-CoA synthetase functions in the citric acid cycle (TCA), coupling the hydrolysis of succinyl-CoA to the synthesis of either ATP or GTP and thus represents the only step of substrate-level phosphorylation in the TCA. The beta subunit provides nucleotide specificity of the enzyme and binds the substrate succinate, while the binding sites for coenzyme A and phosphate are found in the alpha subunit. The chain is Succinate--CoA ligase [ADP-forming] subunit beta from Rhodopseudomonas palustris (strain BisB18).